A 160-amino-acid chain; its full sequence is Deoxyuridine 5'-triphosphate nucleotidohydrolase (160 aa).

Ser-80, Gly-93, Asp-96, Tyr-99, Lys-104, Arg-149, Phe-154, and Gly-155 together coordinate dUMP.

This sequence belongs to the dUTPase family. Homotrimer. The cofactor is Mg(2+).

It catalyses the reaction dUTP + H2O = dUMP + diphosphate + H(+). The protein operates within pyrimidine metabolism; dUMP biosynthesis; dUMP from dCTP (dUTP route): step 2/2. Its function is as follows. Involved in nucleotide metabolism via production of dUMP, the immediate precursor of thymidine nucleotides, and decreases the intracellular concentration of dUTP so that uracil cannot be incorporated into DNA. This is Deoxyuridine 5'-triphosphate nucleotidohydrolase (DUT1) from Debaryomyces hansenii (strain ATCC 36239 / CBS 767 / BCRC 21394 / JCM 1990 / NBRC 0083 / IGC 2968) (Yeast).